Here is a 426-residue protein sequence, read N- to C-terminus: Serine hydroxymethyltransferase (426 aa).

(6S)-5,6,7,8-tetrahydrofolate is bound by residues Leu115 and 119–121 (GHI). Lys225 bears the N6-(pyridoxal phosphate)lysine mark.

This sequence belongs to the SHMT family. Homodimer. Pyridoxal 5'-phosphate serves as cofactor.

It localises to the cytoplasm. Its pathway is amino-acid biosynthesis; glycine biosynthesis; glycine from L-serine: step 1/1. Functionally, catalyzes the reversible interconversion of serine and glycine with a modified folate serving as the one-carbon carrier. Also exhibits a pteridine-independent aldolase activity toward beta-hydroxyamino acids, producing glycine and aldehydes, via a retro-aldol mechanism. In Thermoplasma volcanium (strain ATCC 51530 / DSM 4299 / JCM 9571 / NBRC 15438 / GSS1), this protein is Serine hydroxymethyltransferase.